The sequence spans 815 residues: MSNNVKLQVLLRAVDQASRPFKSIRTASKSLSGDIRETQKSLRELNGHASRIEGFRKTSAQLAVTGHALEKARQEAEALATQFKNTERPTRAQAKVLESAKRAAEDLQAKYNRLTDSVKRQQRELAAVGINTRNLAHDEQGLKNRISETTAQLNRQRDALVRVSAQQAKLNAVKQRYQAGKELAGNMASVGAAGVGIAAAGTMAGVKLLMPGYEFAQKNSELQAVIGVAKDSAEMAALRKQARQLGDNTAASADDAAGAQIIIAKAGGDVDAIQAATPVTLNMALANRRTMEENAALLMGMKSAFQLSNDKVAHIGDVLSMTMNKTAADFDGMSDALTYAAPVAKNAGVSIEETAAMVGALHDAKITGSMAGTGSRAVLSRLQAPTGKAWDALKELGVKTSDSKGNTRPIFTILKEMQASFEKNRLGTAQQAEYMKTIFGEEASSAAAVLMTAASTGKLDKLTAAFKASDGKTAELVNIMQDNLGGDFKAFQSAYEAVGTDLFDQQEGALRKLTQTATKYVLKLDGWIQKNKSLASTIGIIAGGALALTGIIGAIGLVAWPVITGINAIIAAAGAMGAVFTTVGSAVMTAIGAISWPVVAVVAAIVAGALLIRKYWEPVSAFFGGVVEGLKAAFAPVGELFTPLKPVFDWLGEKLQAAWQWFKNLIAPVKATQDTLNRCRDTGVMFGQALADALMLPLNAFNKLRSGIDWVLEKLGVINKESDTLDQTAARTHTATYGTGDYIPATSSYAGYQAYQPVTAPAGRSYVDQSKNEYHISLTGGTAPGTQLDRQLQDALEKYERDKRARARASMMHDG.

Residues His-67–Val-163 adopt a coiled-coil conformation.

It belongs to the P2likevirus tape measure protein family.

In terms of biological role, serves as a base for tail tube protein polymerization and acts as a template for tail length determination. The chain is Probable tape measure protein from Escherichia phage P2 (Bacteriophage P2).